A 236-amino-acid chain; its full sequence is 15,16-dihydrobiliverdin:ferredoxin oxidoreductase (236 aa).

Belongs to the HY2 family.

The catalysed reaction is 15,16-dihydrobiliverdin + oxidized 2[4Fe-4S]-[ferredoxin] = biliverdin IXalpha + reduced 2[4Fe-4S]-[ferredoxin] + 2 H(+). Catalyzes the two-electron reduction of biliverdin IX-alpha at the C15 methine bridge. This Prochlorococcus marinus (strain MIT 9312) protein is 15,16-dihydrobiliverdin:ferredoxin oxidoreductase.